The following is a 342-amino-acid chain: Elongation factor Ts (342 aa).

Residues 79–82 (TDFV) form an involved in Mg(2+) ion dislocation from EF-Tu region.

Belongs to the EF-Ts family.

It is found in the cytoplasm. In terms of biological role, associates with the EF-Tu.GDP complex and induces the exchange of GDP to GTP. It remains bound to the aminoacyl-tRNA.EF-Tu.GTP complex up to the GTP hydrolysis stage on the ribosome. This chain is Elongation factor Ts (tsf), found in Lactococcus lactis subsp. lactis (strain IL1403) (Streptococcus lactis).